Here is a 150-residue protein sequence, read N- to C-terminus: Cytochrome c oxidase subunit 5A, mitochondrial (150 aa).

The N-terminal 41 residues, 1-41 (MLGTALRRCAVAAASRAGPRGLQHPAPVPGPTAAIQSIRCY), are a transit peptide targeting the mitochondrion. The SIFI-degron signature appears at 2–17 (LGTALRRCAVAAASRA). Lys-87 and Lys-113 each carry N6-acetyllysine. Thr-141 is subject to Phosphothreonine.

It belongs to the cytochrome c oxidase subunit 5A family. In terms of assembly, component of the cytochrome c oxidase (complex IV, CIV), a multisubunit enzyme composed of 14 subunits. The complex is composed of a catalytic core of 3 subunits MT-CO1, MT-CO2 and MT-CO3, encoded in the mitochondrial DNA, and 11 supernumerary subunits COX4I, COX5A, COX5B, COX6A, COX6B, COX6C, COX7A, COX7B, COX7C, COX8 and NDUFA4, which are encoded in the nuclear genome. The complex exists as a monomer or a dimer and forms supercomplexes (SCs) in the inner mitochondrial membrane with NADH-ubiquinone oxidoreductase (complex I, CI) and ubiquinol-cytochrome c oxidoreductase (cytochrome b-c1 complex, complex III, CIII), resulting in different assemblies (supercomplex SCI(1)III(2)IV(1) and megacomplex MCI(2)III(2)IV(2)). Interacts with AFG1L. Interacts with RAB5IF. In terms of processing, in response to mitochondrial stress, the precursor protein is ubiquitinated by the SIFI complex in the cytoplasm before mitochondrial import, leading to its degradation. Within the SIFI complex, UBR4 initiates ubiquitin chain that are further elongated or branched by KCMF1.

It is found in the mitochondrion inner membrane. Its pathway is energy metabolism; oxidative phosphorylation. Component of the cytochrome c oxidase, the last enzyme in the mitochondrial electron transport chain which drives oxidative phosphorylation. The respiratory chain contains 3 multisubunit complexes succinate dehydrogenase (complex II, CII), ubiquinol-cytochrome c oxidoreductase (cytochrome b-c1 complex, complex III, CIII) and cytochrome c oxidase (complex IV, CIV), that cooperate to transfer electrons derived from NADH and succinate to molecular oxygen, creating an electrochemical gradient over the inner membrane that drives transmembrane transport and the ATP synthase. Cytochrome c oxidase is the component of the respiratory chain that catalyzes the reduction of oxygen to water. Electrons originating from reduced cytochrome c in the intermembrane space (IMS) are transferred via the dinuclear copper A center (CU(A)) of subunit 2 and heme A of subunit 1 to the active site in subunit 1, a binuclear center (BNC) formed by heme A3 and copper B (CU(B)). The BNC reduces molecular oxygen to 2 water molecules using 4 electrons from cytochrome c in the IMS and 4 protons from the mitochondrial matrix. This Nycticebus coucang (Slow loris) protein is Cytochrome c oxidase subunit 5A, mitochondrial (COX5A).